Consider the following 124-residue polypeptide: MARIAGVDLPREKRVEIALTYIFGIGLSRSKQILRDTGVDPNKRVKDLTDDEVAKIRDYIDKNFKVEGELRAEIARNIKRLIDIRCYRGLRHLRGLPVRGQRTRTNARTRKGPRKTVGVMRKKS.

A disordered region spans residues 99–124 (RGQRTRTNARTRKGPRKTVGVMRKKS). Residues 101–124 (QRTRTNARTRKGPRKTVGVMRKKS) are compositionally biased toward basic residues.

The protein belongs to the universal ribosomal protein uS13 family. In terms of assembly, part of the 30S ribosomal subunit. Forms a loose heterodimer with protein S19. Forms two bridges to the 50S subunit in the 70S ribosome.

Functionally, located at the top of the head of the 30S subunit, it contacts several helices of the 16S rRNA. In the 70S ribosome it contacts the 23S rRNA (bridge B1a) and protein L5 of the 50S subunit (bridge B1b), connecting the 2 subunits; these bridges are implicated in subunit movement. Contacts the tRNAs in the A and P-sites. The sequence is that of Small ribosomal subunit protein uS13 from Caldicellulosiruptor bescii (strain ATCC BAA-1888 / DSM 6725 / KCTC 15123 / Z-1320) (Anaerocellum thermophilum).